The chain runs to 497 residues: Probable polyamine oxidase 4 (497 aa).

FAD is bound by residues E58, R66, V247, and E435. The Microbody targeting signal signature appears at 495-497; it reads SRM.

It belongs to the flavin monoamine oxidase family. Requires FAD as cofactor. In terms of tissue distribution, highly expressed in roots, flowers and greening cotelydons. Lower expression in other tissues.

It localises to the peroxisome. The catalysed reaction is spermine + O2 + H2O = 3-aminopropanal + spermidine + H2O2. The enzyme catalyses spermidine + O2 + H2O = 3-aminopropanal + putrescine + H2O2. It participates in amine and polyamine degradation; spermine degradation. The protein operates within amine and polyamine degradation; spermidine degradation. Functionally, flavoenzyme involved in polyamine back-conversion. Catalyzes the oxidation of the secondary amino group of polyamines, such as spermine and spermidine. Substrate preference is spermine &gt; spermidine. No activity detected when putrescine or N(1)-acetylspermine are used as substrates. Plays an important role in the regulation of polyamine intracellular concentration. In Arabidopsis thaliana (Mouse-ear cress), this protein is Probable polyamine oxidase 4 (PAO4).